Here is a 249-residue protein sequence, read N- to C-terminus: Glutathione S-transferase S1 (249 aa).

Low complexity predominate over residues 1 to 38; that stretch reads MADEAQAPPAEGAPPAEGEAPPPAEGAEGAVEGGEAAP. Residues 1-42 form a disordered region; the sequence is MADEAQAPPAEGAPPAEGEAPPPAEGAEGAVEGGEAAPPAEP. In terms of domain architecture, GST N-terminal spans 48-125; the sequence is HSYTLFYFNV…FLAKTVGLCG (78 aa). Residues Tyr-54, Trp-85, Lys-89, 96-97, and 109-110 each bind glutathione; these read QM and QS. Residues 127–249 enclose the GST C-terminal domain; the sequence is TPWEDLQIDI…WIEKRPVTEV (123 aa).

This sequence belongs to the GST superfamily. Sigma family. Homodimer.

It carries out the reaction RX + glutathione = an S-substituted glutathione + a halide anion + H(+). Its function is as follows. Conjugation of reduced glutathione to a wide number of exogenous and endogenous hydrophobic electrophiles. May be involved in the detoxification of metabolites produced during cellular division and morphogenesis. The chain is Glutathione S-transferase S1 from Drosophila melanogaster (Fruit fly).